A 95-amino-acid chain; its full sequence is UPF0235 protein AnaeK_1146 (95 aa).

It belongs to the UPF0235 family.

This is UPF0235 protein AnaeK_1146 from Anaeromyxobacter sp. (strain K).